We begin with the raw amino-acid sequence, 461 residues long: TWiK family of potassium channels protein 18 (461 aa).

Topologically, residues 1-21 are cytoplasmic; the sequence is MAIVAQGVSTILTTFQKTFKG. Residues 22-42 form a helical membrane-spanning segment; sequence LLPLIILVAYTLLGAWIFWMI. N-linked (GlcNAc...) asparagine glycosylation is present at Asn88. Residues 116 to 136 constitute an intramembrane region (pore-forming); it reads FLGSIFYCMTVYTTIGYGNIV. Residues 144-164 traverse the membrane as a helical segment; the sequence is FATILYAFIGIPLTVLSLYCL. The Cytoplasmic portion of the chain corresponds to 165-224; that stretch reads GSLFAKGCKMLWRFFLKSTRVVSKDLSNKISEAADNIEEGTTAITPSAEKTENNDDDLLS. A helical membrane pass occupies residues 225 to 245; sequence FPISGLLLITVIWVIFCAVLF. The pore-forming intramembrane region spans 253–273; sequence FGTSLYFTLISFTTIGFGDIL. Residues 281 to 301 traverse the membrane as a helical segment; sequence PIVGVLLLIGLSLVSTVMTLI. At 302-461 the chain is on the cytoplasmic side; it reads QQQIEALASG…GNEDYLEHDI (160 aa). A disordered region spans residues 328–347; sequence REDGEVDEHVDPEEDPENNK.

It belongs to the two pore domain potassium channel (TC 1.A.1.8) family. In terms of tissue distribution, expressed in body wall muscle.

It localises to the membrane. Its function is as follows. Outwardly rectifying potassium channel protein; activity is sharply augmented by increase in temperature. In Caenorhabditis elegans, this protein is TWiK family of potassium channels protein 18 (twk-18).